The primary structure comprises 632 residues: Protein NSP-INTERACTING KINASE 3 (632 aa).

A signal peptide spans 1-25; that stretch reads MEGVRFVVWRLGFLVFVWFFDISSA. The Extracellular segment spans residues 26-238; that stretch reads TLSPTGVNYE…GTRTNGHHVA (213 aa). Asparagine 96 carries an N-linked (GlcNAc...) asparagine glycan. LRR repeat units lie at residues 97-121, 122-145, 147-168, and 169-193; these read LTYLQSVVLQNNAITGPIPETIGRL, EKLQSLDLSNNSFTGEIPASLGEL, NLNYLRLNNNSLIGTCPESLSK, and IEGLTLVDISYNNLSGSLPKVSART. Residues asparagine 131, asparagine 155, asparagine 181, and asparagine 210 are each glycosylated (N-linked (GlcNAc...) asparagine). A helical transmembrane segment spans residues 239-259; sequence LAFAASFSAAFFVFFTSGMFL. At 260–632 the chain is on the cytoplasmic side; it reads WWRYRRNKQI…VEAIELSGPR (373 aa). Threonine 298 carries the phosphothreonine modification. The Protein kinase domain maps to 301–584; the sequence is FNSKNILGRG…EGDGLAERWE (284 aa). 307–315 contacts ATP; that stretch reads LGRGGYGIV. Position 324 is a phosphothreonine (threonine 324). Lysine 329 contributes to the ATP binding site. Residues serine 382 and serine 385 each carry the phosphoserine modification. An interaction with geminivirus NSP protein region spans residues 415-495; it reads YLHEQCDPKI…DVFGFGILLL (81 aa). The active-site Proton acceptor is aspartate 428. 3 positions are modified to phosphothreonine: threonine 461, threonine 462, and threonine 467. A Phosphotyrosine modification is found at tyrosine 475. Serine 477 carries the post-translational modification Phosphoserine. Threonine 478 is modified (phosphothreonine). At serine 482 the chain carries Phosphoserine. At threonine 557 the chain carries Phosphothreonine.

The protein belongs to the protein kinase superfamily. Ser/Thr protein kinase family. Oligomer. Interacts with geminivirus nuclear shuttle protein (NSP). Autophosphorylated. As to expression, expressed in seedlings, leaves and flowers.

It is found in the cell membrane. The enzyme catalyses L-seryl-[protein] + ATP = O-phospho-L-seryl-[protein] + ADP + H(+). The catalysed reaction is L-threonyl-[protein] + ATP = O-phospho-L-threonyl-[protein] + ADP + H(+). Its activity is regulated as follows. Inhibited by the viral nuclear shuttle protein (NSP) that binds to the region required for oligomerization. Functionally, involved in defense response to geminivirus infection. The sequence is that of Protein NSP-INTERACTING KINASE 3 (NIK3) from Arabidopsis thaliana (Mouse-ear cress).